The primary structure comprises 1396 residues: ABC-type transporter cicA (1396 aa).

Residues 1 to 40 form a disordered region; that stretch reads MRLSSEAKIAESGGQPPTAGSRSETGSESTEAESADPKAQ. The segment covering 18-29 has biased composition (low complexity); the sequence is TAGSRSETGSES. 3 consecutive transmembrane segments (helical) span residues 142–162, 191–211, and 300–320; these read FLLG…APYL, GFVV…NQFL, and MFHI…LLLV. An ABC transmembrane type-1 1 domain is found at 143–466; that stretch reads LLGGFCHLIS…LPLVLGQITD (324 aa). Asparagine 321 carries an N-linked (GlcNAc...) asparagine glycan. The next 3 membrane-spanning stretches (helical) occupy residues 324–344, 409–429, and 440–460; these read YSAL…TYAV, ILCV…ITYA, and IFSS…LPLV. Positions 510 to 533 are enriched in basic and acidic residues; that stretch reads AADKEAEKVEKKANPRRTEPKSEA. The tract at residues 510–543 is disordered; the sequence is AADKEAEKVEKKANPRRTEPKSEAPTDSAESDEP. The ABC transporter 1 domain maps to 525-751; the sequence is RRTEPKSEAP…NDLFKQLMST (227 aa). ATP is bound at residue 563-570; sequence GTVGSGKS. Asparagine 604 carries an N-linked (GlcNAc...) asparagine glycan. The interval 751–787 is disordered; the sequence is TASQDSKEDEEEATEVVEEEAEKQAQQEPTKPAAALM. Positions 757 to 771 are enriched in acidic residues; it reads KEDEEEATEVVEEEA. 2 consecutive transmembrane segments (helical) span residues 816–836 and 852–872; these read LAIL…NLWL and YIGI…IFST. Residues 816-1093 form the ABC transmembrane type-1 2 domain; the sequence is LAILFLLAFA…TVRQLAEVEN (278 aa). Residue asparagine 880 is glycosylated (N-linked (GlcNAc...) asparagine). Transmembrane regions (helical) follow at residues 930–947, 951–970, 1036–1056, and 1065–1085; these read MYAI…LIIV, YFAI…SNYY, LSVR…VLVV, and SISG…QFTV. Asparagine 1096, asparagine 1150, and asparagine 1154 each carry an N-linked (GlcNAc...) asparagine glycan. The ABC transporter 2 domain occupies 1131–1380; sequence ITFDNVAMRY…EDGIFRAMCE (250 aa). Residue 1165-1172 participates in ATP binding; that stretch reads GRTGAGKS.

Belongs to the ABC transporter superfamily. ABCC family. Conjugate transporter (TC 3.A.1.208) subfamily.

The protein resides in the cell membrane. Functionally, ABC-type transporter; part of the gene cluster that mediates the biosynthesis of cichorine, a phytotoxin active against knapweed, corn, and soybeans. CicA is probably involved in the secretion of cichorine. The polypeptide is ABC-type transporter cicA (Emericella nidulans (strain FGSC A4 / ATCC 38163 / CBS 112.46 / NRRL 194 / M139) (Aspergillus nidulans)).